Here is a 138-residue protein sequence, read N- to C-terminus: ATP synthase epsilon chain (138 aa).

Belongs to the ATPase epsilon chain family. F-type ATPases have 2 components, CF(1) - the catalytic core - and CF(0) - the membrane proton channel. CF(1) has five subunits: alpha(3), beta(3), gamma(1), delta(1), epsilon(1). CF(0) has three main subunits: a, b and c.

The protein resides in the cell inner membrane. Its function is as follows. Produces ATP from ADP in the presence of a proton gradient across the membrane. The protein is ATP synthase epsilon chain of Geotalea uraniireducens (strain Rf4) (Geobacter uraniireducens).